The following is a 729-amino-acid chain: MKLSNEYAWIIPLCPLIASCCTGSLSFFFPRVARGFHRLCALLNVFSLAISMFVSLAIFQEQFVKNPIQQYLWIWIPRSTFCVEIGFLVDSLTLVMSLLVTTVGVLVMIYSDSYMCYDRGYTRFYAYLSLFTASMLGLVLSPNLIQLYVFWELVGMCSYLLVGFWFARSSAANACQKAFVTNRIGDFGLLLGILGIYWTTGSFEISELCDRFAKLKEIGFSNPILTNIIAFLLLAGPVAKSAQFPLHVWLPDAMEGPTPISALIHAATMVAAGIFFIARIYGLISTLPLVMQASSWLGGATALLGATLALAQRDLKKGLAYSTMSQLGYMVLALGIGAYQSALFHLVTHAYSKALLFLGAGSVIHSIEKVVGYSPNRSQNMFFMGGLRKYMPITGTTFLLGTLSLSGIPPLACFWSKDEIIHESWLSSLPLGILASGTAGLTAFYMFRIYLLTFEGDFCTIKTDWVDFNHFAPLSISMWGETEGNLSLNQINQNVASVRLGITKNKGFSSSYLANPNGITNVHYDQSLPKPKESSSAMTFSLVMLAIPTTLVGLLGINLIGETANFELSPEWLINPVHFFELSKSFNIYIKILLNSRSSLILSFFGIFFSFIIYKKSYKYFYITKKLVGFTKLVSKFGLLVQSWSLNRGYIDYYYDICFVRNLRSLSKSLSDFDRYGIDGFVNVIGALNFFGGEFIRYGENGRISYYLFIIIFGAILSSVLIFIFLPFP.

18 consecutive transmembrane segments (helical) span residues 9–29 (WIIP…SFFF), 39–59 (LCAL…LAIF), 87–107 (FLVD…GVLV), 125–145 (YAYL…PNLI), 147–167 (LYVF…FWFA), 184–204 (IGDF…GSFE), 218–238 (IGFS…AGPV), 258–278 (TPIS…FFIA), 289–311 (LVMQ…LALA), 327–347 (LGYM…FHLV), 354–374 (ALLF…VGYS), 395–415 (GTTF…ACFW), 425–445 (WLSS…TAFY), 540–560 (FSLV…INLI), 592–612 (ILLN…FSFI), 627–646 (LVGF…SWSL), 676–696 (YGID…GEFI), and 708–728 (LFII…FLPF).

The protein belongs to the complex I subunit 5 family. As to quaternary structure, NDH is composed of at least 16 different subunits, 5 of which are encoded in the nucleus.

Its subcellular location is the plastid. It is found in the chloroplast thylakoid membrane. The catalysed reaction is a plastoquinone + NADH + (n+1) H(+)(in) = a plastoquinol + NAD(+) + n H(+)(out). It catalyses the reaction a plastoquinone + NADPH + (n+1) H(+)(in) = a plastoquinol + NADP(+) + n H(+)(out). In terms of biological role, NDH shuttles electrons from NAD(P)H:plastoquinone, via FMN and iron-sulfur (Fe-S) centers, to quinones in the photosynthetic chain and possibly in a chloroplast respiratory chain. The immediate electron acceptor for the enzyme in this species is believed to be plastoquinone. Couples the redox reaction to proton translocation, and thus conserves the redox energy in a proton gradient. In Adiantum capillus-veneris (Maidenhair fern), this protein is NAD(P)H-quinone oxidoreductase subunit 5, chloroplastic (ndhF).